The following is a 1017-amino-acid chain: Type VI secretion system spike protein VgrG3 (1017 aa).

Asp842 is an active-site residue.

This sequence belongs to the VgrG protein family. As to quaternary structure, interacts with TsiV3. Interacts with TseL.

The protein resides in the secreted. In terms of biological role, part of the type VI secretion system specialized secretion system, which delivers several virulence factors in both prokaryotic and eukaryotic cells during infection. Forms the spike at the tip of the elongating tube formed by haemolysin co-regulated protein Hcp. Allows the delivery of the TseL antibacterial toxin to target cells where it exerts its toxicity. Additionally, acts directly as an effector and targets the cell wall peptidoglycan layer of prey cells for degradation via its C-terminus. Toxicity is counteracted by a cognate immunity protein TsiV3. The chain is Type VI secretion system spike protein VgrG3 from Vibrio cholerae serotype O1 (strain ATCC 39315 / El Tor Inaba N16961).